The chain runs to 345 residues: Protein RecA (345 aa).

Residue 65-72 (GPESSGKT) coordinates ATP.

It belongs to the RecA family.

The protein resides in the cytoplasm. In terms of biological role, can catalyze the hydrolysis of ATP in the presence of single-stranded DNA, the ATP-dependent uptake of single-stranded DNA by duplex DNA, and the ATP-dependent hybridization of homologous single-stranded DNAs. It interacts with LexA causing its activation and leading to its autocatalytic cleavage. This chain is Protein RecA, found in Stenotrophomonas maltophilia (strain R551-3).